Consider the following 880-residue polypeptide: Alanine--tRNA ligase (880 aa).

Zn(2+) is bound by residues histidine 567, histidine 571, cysteine 669, and histidine 673.

It belongs to the class-II aminoacyl-tRNA synthetase family. It depends on Zn(2+) as a cofactor.

It is found in the cytoplasm. It carries out the reaction tRNA(Ala) + L-alanine + ATP = L-alanyl-tRNA(Ala) + AMP + diphosphate. In terms of biological role, catalyzes the attachment of alanine to tRNA(Ala) in a two-step reaction: alanine is first activated by ATP to form Ala-AMP and then transferred to the acceptor end of tRNA(Ala). Also edits incorrectly charged Ser-tRNA(Ala) and Gly-tRNA(Ala) via its editing domain. The chain is Alanine--tRNA ligase from Bacillus thuringiensis (strain Al Hakam).